Reading from the N-terminus, the 220-residue chain is Uracil-DNA glycosylase (220 aa).

The Proton acceptor role is filled by Asp-61.

This sequence belongs to the uracil-DNA glycosylase (UDG) superfamily. UNG family.

The protein resides in the cytoplasm. The enzyme catalyses Hydrolyzes single-stranded DNA or mismatched double-stranded DNA and polynucleotides, releasing free uracil.. Its function is as follows. Excises uracil residues from the DNA which can arise as a result of misincorporation of dUMP residues by DNA polymerase or due to deamination of cytosine. This is Uracil-DNA glycosylase from Glaesserella parasuis serovar 5 (strain SH0165) (Haemophilus parasuis).